Consider the following 275-residue polypeptide: NH(3)-dependent NAD(+) synthetase (275 aa).

46–53 (GISGGQDS) is an ATP binding site. Asp52 contributes to the Mg(2+) binding site. Residue Arg140 coordinates deamido-NAD(+). Thr160 lines the ATP pocket. Residue Glu165 participates in Mg(2+) binding. 2 residues coordinate deamido-NAD(+): Lys173 and Asp180. ATP contacts are provided by Lys189 and Thr211. Position 260 to 261 (260 to 261 (HK)) interacts with deamido-NAD(+).

It belongs to the NAD synthetase family. In terms of assembly, homodimer.

It carries out the reaction deamido-NAD(+) + NH4(+) + ATP = AMP + diphosphate + NAD(+) + H(+). It functions in the pathway cofactor biosynthesis; NAD(+) biosynthesis; NAD(+) from deamido-NAD(+) (ammonia route): step 1/1. In terms of biological role, catalyzes the ATP-dependent amidation of deamido-NAD to form NAD. Uses ammonia as a nitrogen source. The chain is NH(3)-dependent NAD(+) synthetase from Shigella boydii serotype 18 (strain CDC 3083-94 / BS512).